The sequence spans 2339 residues: Voltage-dependent N-type calcium channel subunit alpha-1B (2339 aa).

Residues 1 to 37 form a disordered region; that stretch reads MVRFGDELGGRYGGPGGGERARGGGAGGAGGPGPGGL. Residues 1 to 90 are Cytoplasmic-facing; that stretch reads MVRFGDELGG…DNVVRKYAKR (90 aa). A compositionally biased stretch (gly residues) spans 10 to 37; it reads GRYGGPGGGERARGGGAGGAGGPGPGGL. Arg-22 bears the Omega-N-methylarginine mark. One copy of the I repeat lies at 82 to 359; it reads NVVRKYAKRI…LVLGVLSGEF (278 aa). A helical membrane pass occupies residues 91–114; the sequence is ITEWPPFEYMILATIIANCIVLAL. The Extracellular portion of the chain corresponds to 115 to 131; that stretch reads EQHLPDGDKTPMSERLD. Residues 132–152 form a helical membrane-spanning segment; it reads DTEPYFIGIFCFEAGIKIIAL. Residues 153–163 are Cytoplasmic-facing; it reads GFVFHKGSYLR. The helical transmembrane segment at 164-182 threads the bilayer; sequence NGWNVMDFVVVLTGILATA. The Extracellular segment spans residues 183–187; that stretch reads GTDFD. The helical transmembrane segment at 188–211 threads the bilayer; it reads LRTLRAVRVLRPLKLVSGIPSLQV. At 212–221 the chain is on the cytoplasmic side; sequence VLKSIMKAMV. A helical transmembrane segment spans residues 222–244; it reads PLLQIGLLLFFAILMFAIIGLEF. Over 245 to 331 the chain is Extracellular; the sequence is YMGKFHKACF…NTNDAAGNTW (87 aa). N-linked (GlcNAc...) asparagine glycosylation occurs at Asn-256. Residues 332–356 traverse the membrane as a helical segment; it reads NWLYFIPLIIIGSFFMLNLVLGVLS. Topologically, residues 357 to 482 are cytoplasmic; sequence GEFAKERERV…FFIRRMVKAQ (126 aa). Residues 379–396 form a binding to the beta subunit region; the sequence is QQIERELNGYLEWIFKAE. At Ser-411 the chain carries Phosphoserine. Residue 451 to 458 coordinates ATP; sequence ASLKSGKT. One copy of the II repeat lies at 468–712; that stretch reads EKMFRFFIRR…VFLAIAVDNL (245 aa). The chain crosses the membrane as a helical span at residues 483–501; sequence SFYWVVLCVVALNTLCVAM. Over 502-511 the chain is Extracellular; the sequence is VHYNQPRRLT. A helical transmembrane segment spans residues 512–534; the sequence is TTLYFAEFVFLGLFLTEMSLKMY. Over 535–544 the chain is Cytoplasmic; sequence GLGPRSYFRS. Ser-544 provides a ligand contact to a 1,2-diacyl-sn-glycero-3-phospho-(1D-myo-inositol-4,5-bisphosphate). A helical transmembrane segment spans residues 545–566; sequence SFNCFDFGVIVGSVFEVVWAAI. Over 567–573 the chain is Extracellular; it reads KPGSSFG. A helical transmembrane segment spans residues 574–586; the sequence is ISVLRALRLLRIF. Residues Arg-584 and Lys-587 each coordinate a 1,2-diacyl-sn-glycero-3-phospho-(1D-myo-inositol-4,5-bisphosphate). Residues 587–604 are Cytoplasmic-facing; that stretch reads KVTKYWSSLRNLVVSLLN. A helical transmembrane segment spans residues 605 to 630; sequence SMKSIISLLFLLFLFIVVFALLGMQL. The Extracellular portion of the chain corresponds to 631–682; it reads FGGQFNFQDETPTTNFDTFPAAILTVFQILTGEDWNAVMYHGIESQGGVSKG. Residues 683–709 traverse the membrane as a helical segment; the sequence is MFSSFYFIVLTLFGNYTLLNVFLAIAV. Residues 710 to 1151 lie on the Cytoplasmic side of the membrane; that stretch reads DNLANAQELT…FCHYIVTMRY (442 aa). 3 positions are modified to phosphoserine: Ser-745, Ser-748, and Ser-783. 4 stretches are compositionally biased toward basic and acidic residues: residues 816-826, 857-886, 922-932, and 965-976; these read PLVVELGRDGA, KDKT…EERP, GSPEEAAEREP, and GPREAESGEEPA. 2 disordered regions span residues 816–1038 and 1054–1076; these read PLVV…VTVG and QPED…DPNT. Positions 977-986 are enriched in basic residues; sequence RRHRARHKAQ. Over residues 990-1029 the composition is skewed to basic and acidic residues; the sequence is EAVEKETTEKEATEKEAEIVEADKEKELRNHQPREPHCDL. The residue at position 1069 (Ser-1069) is a Phosphoserine. An III repeat occupies 1137 to 1419; that stretch reads NLLRRFCHYI…IFVALIIITF (283 aa). A helical transmembrane segment spans residues 1152–1170; the sequence is FEVVILVVIALSSIALAAE. Residues 1171–1178 lie on the Extracellular side of the membrane; that stretch reads DPVRTDSP. Residues 1179-1203 traverse the membrane as a helical segment; it reads RNNALKYLDYIFTGVFTFEMVIKMI. Residues 1204–1217 are Cytoplasmic-facing; that stretch reads DLGLLLHPGAYFRD. A helical transmembrane segment spans residues 1218–1238; it reads LWNILDFIVVSGALVAFAFSG. Residues 1239–1244 are Extracellular-facing; that stretch reads SKGKDI. A helical membrane pass occupies residues 1245–1265; the sequence is NTIKSLRVLRVLRPLKTIKRL. The Cytoplasmic portion of the chain corresponds to 1266–1283; that stretch reads PKLKAVFDCVVNSLKNVL. The chain crosses the membrane as a helical span at residues 1284-1303; that stretch reads NILIVYMLFMFIFAVIAVQL. Topologically, residues 1304–1390 are extracellular; it reads FKGKFFYCTD…EQGPSPGYRM (87 aa). The chain crosses the membrane as a helical span at residues 1391–1416; sequence ELSIFYVVYFVVFPFFFVNIFVALII. The Cytoplasmic segment spans residues 1417–1471; the sequence is ITFQEQGDKVMSECSLEKNERACIDFAISAKPLTRYMPQNRQSFQYKTWTFVVSP. Residues 1456-1711 form an IV repeat; the sequence is NRQSFQYKTW…LFVAVIMDNF (256 aa). The helical transmembrane segment at 1472 to 1490 threads the bilayer; sequence PFEYFIMAMIALNTVVLMM. Over 1491-1498 the chain is Extracellular; that stretch reads KFYDAPYE. A helical transmembrane segment spans residues 1499–1523; it reads YELMLKCLNIVFTSMFSMECVLKII. Residues 1524 to 1533 are Cytoplasmic-facing; sequence AFGVLNYFRD. A helical transmembrane segment spans residues 1534–1555; that stretch reads AWNVFDFVTVLGSITDILVTEI. Residues 1556 to 1563 lie on the Extracellular side of the membrane; sequence AETNNFIN. An N-linked (GlcNAc...) asparagine glycan is attached at Asn-1563. Residues 1564 to 1582 traverse the membrane as a helical segment; that stretch reads LSFLRLFRAARLIKLLRQG. Residues 1583 to 1601 are Cytoplasmic-facing; sequence YTIRILLWTFVQSFKALPY. Residues 1602-1621 form a helical membrane-spanning segment; the sequence is VCLLIAMLFFIYAIIGMQVF. The Extracellular portion of the chain corresponds to 1622–1683; that stretch reads GNIALDDDTS…ANATECGSDF (62 aa). Asn-1675 is a glycosylation site (N-linked (GlcNAc...) asparagine). Residues 1684-1707 traverse the membrane as a helical segment; it reads AYFYFVSFIFLCSFLMLNLFVAVI. The Cytoplasmic portion of the chain corresponds to 1708–2339; sequence MDNFEYLTRD…YHHPDQDHWC (632 aa). The EF-hand domain occupies 1724-1759; it reads HHLDEFIRVWAEYDPAACGRISYNDMFEMLKHMSPP. Ca(2+)-binding residues include Asp-1737, Arg-1743, and Asp-1748. Over residues 1916–1931 the composition is skewed to polar residues; sequence SSTSLSNGGAIQNQES. Disordered regions lie at residues 1916–1968 and 1981–2206; these read SSTS…VGRS and TRRG…YKTA. The span at 1946–1960 shows a compositional bias: basic and acidic residues; that stretch reads DAPHEARPPLERGHS. Residues 2049-2063 show a composition bias toward basic residues; the sequence is SHHHHHRCHRRRDRK. The residue at position 2066 (Ser-2066) is a Phosphoserine. Residues 2098-2116 show a composition bias toward basic and acidic residues; sequence CRRERERRQERGRSQERRQ. Residues 2143-2153 show a composition bias toward low complexity; the sequence is PSLSSHPTSPT. A compositionally biased stretch (polar residues) spans 2164–2180; the sequence is GSGSVNGSPLLSTSGAS. Ser-2224, Ser-2233, and Ser-2256 each carry phosphoserine.

Belongs to the calcium channel alpha-1 subunit (TC 1.A.1.11) family. CACNA1B subfamily. In terms of assembly, multisubunit complex consisting of alpha-1, alpha-2, beta and delta subunits in a 1:1:1:1 ratio. The channel activity is directed by the pore-forming and voltage-sensitive alpha-1 subunit. In many cases, this subunit is sufficient to generate voltage-sensitive calcium channel activity. The auxiliary subunits beta and alpha-2/delta linked by a disulfide bridge regulate the channel activity. Interacts with RIMS1. Interacts with FMR1 (via C-terminus); this interaction induces a decrease in the number of presynaptic functional CACNA1B channels at the cell surface. Post-translationally, phosphorylated in vitro by CaM-kinase II, PKA, PKC and CGPK. In terms of tissue distribution, isoform Alpha-1b-1 and isoform Alpha-1b-2 are expressed in the central nervous system, but not in skeletal muscle or aorta. Expressed in the cerebral white matter, cortex, hippocampus, basal ganglia, and cerebellum.

Its subcellular location is the membrane. It catalyses the reaction Ca(2+)(in) = Ca(2+)(out). With respect to regulation, is specifically blocked by omega-conotoxin GVIA. Is specifically blocked by omega-conotoxin MVIIA (ziconotide). Is insensitive to dihydropyridines (DHP). Is specifically blocked by omega-conotoxin MVIIA (ziconotide). Is insensitive to dihydropyridines (DHP). Its function is as follows. Voltage-sensitive calcium channels (VSCC) mediate the entry of calcium ions into excitable cells and are also involved in a variety of calcium-dependent processes, including muscle contraction, hormone or neurotransmitter release, gene expression, cell motility, cell division and cell death. This alpha-1B subunit gives rise to N-type calcium currents. N-type calcium channels belong to the 'high-voltage activated' (HVA) group. They are involved in pain signaling. Calcium channels containing alpha-1B subunit may play a role in directed migration of immature neurons. Mediates Ca(2+) release probability at hippocampal neuronal soma and synaptic terminals. In terms of biological role, voltage-sensitive calcium channels (VSCC) mediate the entry of calcium ions into excitable cells and are also involved in a variety of calcium-dependent processes, including muscle contraction, hormone or neurotransmitter release, gene expression, cell motility, cell division and cell death. This alpha-1B subunit gives rise to N-type calcium currents. This is Voltage-dependent N-type calcium channel subunit alpha-1B (CACNA1B) from Homo sapiens (Human).